We begin with the raw amino-acid sequence, 102 residues long: Flagellar hook-basal body complex protein FliE (102 aa).

The protein belongs to the FliE family.

Its subcellular location is the bacterial flagellum basal body. In Halalkalibacterium halodurans (strain ATCC BAA-125 / DSM 18197 / FERM 7344 / JCM 9153 / C-125) (Bacillus halodurans), this protein is Flagellar hook-basal body complex protein FliE.